A 175-amino-acid polypeptide reads, in one-letter code: NADH-quinone oxidoreductase subunit I (175 aa).

2 4Fe-4S ferredoxin-type domains span residues 44 to 74 (LNRY…VEGA) and 90 to 119 (RVYQ…MTND). Residues C54, C57, C60, C64, C99, C102, C105, and C109 each coordinate [4Fe-4S] cluster. The disordered stretch occupies residues 148–175 (PPHAMAPGATDEDYYRGTVSPSAEADAR).

Belongs to the complex I 23 kDa subunit family. In terms of assembly, NDH-1 is composed of 14 different subunits. Subunits NuoA, H, J, K, L, M, N constitute the membrane sector of the complex. [4Fe-4S] cluster serves as cofactor.

Its subcellular location is the cell membrane. The enzyme catalyses a quinone + NADH + 5 H(+)(in) = a quinol + NAD(+) + 4 H(+)(out). In terms of biological role, NDH-1 shuttles electrons from NADH, via FMN and iron-sulfur (Fe-S) centers, to quinones in the respiratory chain. The immediate electron acceptor for the enzyme in this species is believed to be menaquinone. Couples the redox reaction to proton translocation (for every two electrons transferred, four hydrogen ions are translocated across the cytoplasmic membrane), and thus conserves the redox energy in a proton gradient. This is NADH-quinone oxidoreductase subunit I from Mycolicibacterium gilvum (strain PYR-GCK) (Mycobacterium gilvum (strain PYR-GCK)).